A 1149-amino-acid polypeptide reads, in one-letter code: Beta-alanine-activating enzyme (1149 aa).

Residues 178–186, Asp-408, Arg-422, and Lys-543 contribute to the ATP site; that span reads TSGTTGLPK. Positions 570–646 constitute a Carrier domain; the sequence is ASVRLKLQNL…DLLSHIMTET (77 aa). The residue at position 605 (Ser-605) is an O-(pantetheine 4'-phosphoryl)serine. Positions 653–683 are disordered; sequence PSKKRTADYSDSEASGKRQHKEMTTSSDTES.

This sequence belongs to the ATP-dependent AMP-binding enzyme family.

In terms of biological role, covalently binds beta-alanine in an ATP-dependent manner to form a thioester bond with its phosphopantetheine group and transfers it to an, as yet, unknown acceptor. May be required for a post-translational protein modification or for post-transcriptional modification of an RNA. The sequence is that of Beta-alanine-activating enzyme (aasdh) from Danio rerio (Zebrafish).